The primary structure comprises 396 residues: NADH-quinone oxidoreductase subunit D (396 aa).

Belongs to the complex I 49 kDa subunit family. In terms of assembly, NDH-1 is composed of 14 different subunits. Subunits NuoB, C, D, E, F, and G constitute the peripheral sector of the complex.

The protein resides in the cell inner membrane. The catalysed reaction is a quinone + NADH + 5 H(+)(in) = a quinol + NAD(+) + 4 H(+)(out). NDH-1 shuttles electrons from NADH, via FMN and iron-sulfur (Fe-S) centers, to quinones in the respiratory chain. The immediate electron acceptor for the enzyme in this species is believed to be ubiquinone. Couples the redox reaction to proton translocation (for every two electrons transferred, four hydrogen ions are translocated across the cytoplasmic membrane), and thus conserves the redox energy in a proton gradient. The polypeptide is NADH-quinone oxidoreductase subunit D (Chelativorans sp. (strain BNC1)).